The chain runs to 300 residues: GTPase Era (300 aa).

An Era-type G domain is found at arginine 8 to glutamate 176. The G1 stretch occupies residues glycine 16–serine 23. Residue glycine 16 to serine 23 coordinates GTP. Positions glutamine 42–histidine 46 are G2. The tract at residues aspartate 63–glycine 66 is G3. GTP-binding positions include aspartate 63 to methionine 67 and asparagine 125 to aspartate 128. The segment at asparagine 125–aspartate 128 is G4. Residues isoleucine 155–alanine 157 form a G5 region. The 85-residue stretch at valine 199 to glycine 283 folds into the KH type-2 domain.

It belongs to the TRAFAC class TrmE-Era-EngA-EngB-Septin-like GTPase superfamily. Era GTPase family. In terms of assembly, monomer.

It is found in the cytoplasm. It localises to the cell inner membrane. In terms of biological role, an essential GTPase that binds both GDP and GTP, with rapid nucleotide exchange. Plays a role in 16S rRNA processing and 30S ribosomal subunit biogenesis and possibly also in cell cycle regulation and energy metabolism. This Pseudomonas putida (strain ATCC 700007 / DSM 6899 / JCM 31910 / BCRC 17059 / LMG 24140 / F1) protein is GTPase Era.